Reading from the N-terminus, the 201-residue chain is MQPFTSHTGLAVMIDSANIDTDQIIPKQFLSKVTRDGFGVHLFHDWRYLDDAGEVPNPDFTLNKPRYSGASILLAQENFGCGSSREHAPWALADFGLRAIIAPSFADIFYGNSINNGLLPVKLSANEVRQLMDEVASEEGAQITVDLTTCKVTSPLGAEFSFTLAESARHKLLNGLDAIGLTLSHGIQIGEYESQIPSWRC.

Belongs to the LeuD family. LeuD type 1 subfamily. In terms of assembly, heterodimer of LeuC and LeuD.

The catalysed reaction is (2R,3S)-3-isopropylmalate = (2S)-2-isopropylmalate. It participates in amino-acid biosynthesis; L-leucine biosynthesis; L-leucine from 3-methyl-2-oxobutanoate: step 2/4. Its function is as follows. Catalyzes the isomerization between 2-isopropylmalate and 3-isopropylmalate, via the formation of 2-isopropylmaleate. The chain is 3-isopropylmalate dehydratase small subunit from Shewanella sp. (strain ANA-3).